The chain runs to 664 residues: Putative carboxypeptidase suro-1 (664 aa).

An N-terminal signal peptide occupies residues 1-23; it reads MRYLCKSILLAVHTILLVGSVCC. Positions 24–110 are cleaved as a propeptide — activation peptide; it reads STDVHNTDDK…MSVPDVEKLI (87 aa). The Peptidase M14 domain occupies 160 to 473; that stretch reads DYASYADMVK…EGFREVVDAV (314 aa). The Zn(2+) site is built by His-219 and Glu-222. Substrate contacts are provided by residues 219–222, Arg-281, and 306–307; these read HARE and NR. His-361 contributes to the Zn(2+) binding site. 362–363 provides a ligand contact to substrate; the sequence is SY. The active-site Proton donor/acceptor is Glu-437. A compositionally biased stretch (low complexity) spans 512–543; it reads ASQAAGSTTRSTTTLKTSTTSVSTTSEATSPS. The disordered stretch occupies residues 512–590; sequence ASQAAGSTTR…TTTTEEEDVT (79 aa). Pro residues predominate over residues 564–573; it reads PTPPMAPPIM. The span at 574 to 583 shows a compositional bias: low complexity; the sequence is SPSTEFSTTT. A ShKT domain is found at 621–657; that stretch reads CRDMRYSCGFWLKNNKQVCEEQQSFMRAQCAYTCKFC. Intrachain disulfides connect Cys-621–Cys-657, Cys-628–Cys-650, and Cys-639–Cys-654.

The protein belongs to the peptidase M14 family. Requires Zn(2+) as cofactor. Localizes in stripes along the cuticle.

The protein resides in the cytoplasmic vesicle. It localises to the secreted. Its function is as follows. May play a role in processing or organization of cuticle collagen proteins, including rol-6 and col-19. The chain is Putative carboxypeptidase suro-1 from Caenorhabditis elegans.